Here is a 446-residue protein sequence, read N- to C-terminus: Iroquois homeobox protein 5a (446 aa).

Residues asparagine 117–asparagine 173 constitute a DNA-binding region (homeobox). Residues methionine 175–proline 312 form a disordered region. The segment covering glutamate 184–glutamate 201 has biased composition (acidic residues). 2 stretches are compositionally biased toward basic and acidic residues: residues proline 202 to leucine 220 and proline 227 to leucine 258. Composition is skewed to polar residues over residues lysine 264 to glutamine 274 and serine 293 to isoleucine 303.

Belongs to the TALE/IRO homeobox family.

It localises to the nucleus. Its function is as follows. Transcription factor. Binds to consensus iroquois binding site (IBS) motifs 5'-ACANNTGT-3' or 5'-ACANNNTGT-3' in regulatory elements of target genes. Required, together with irx7, for hyoid joint formation; they act cell autonomously to repress expression of cartilage matrix genes, such as collagen col2a1a, within immature chondrocytes of the joint interzone. May compete with or modify Sox9a activity, thereby reducing Sox9a-mediated activation of col2a1a. Probably acts in the developing hyoid joint downstream of Bmp signaling. In concert with irx6a, plays a role in visual performance. The protein is Iroquois homeobox protein 5a (irx5a) of Danio rerio (Zebrafish).